The chain runs to 330 residues: tRNA uridine(34) hydroxylase (330 aa).

Positions 123 to 217 (SDPEVILVDT…YLEEVKQEES (95 aa)) constitute a Rhodanese domain. The active-site Cysteine persulfide intermediate is the Cys-177.

The protein belongs to the TrhO family.

The enzyme catalyses uridine(34) in tRNA + AH2 + O2 = 5-hydroxyuridine(34) in tRNA + A + H2O. Functionally, catalyzes oxygen-dependent 5-hydroxyuridine (ho5U) modification at position 34 in tRNAs. This chain is tRNA uridine(34) hydroxylase, found in Shewanella sp. (strain MR-4).